We begin with the raw amino-acid sequence, 259 residues long: UPF0739 protein C1orf74 homolog (259 aa).

Belongs to the UPF0739 family.

The polypeptide is UPF0739 protein C1orf74 homolog (Danio rerio (Zebrafish)).